Consider the following 193-residue polypeptide: Ion-translocating oxidoreductase complex subunit A (193 aa).

6 helical membrane-spanning segments follow: residues 5–25, 39–59, 65–85, 102–122, 134–154, and 171–191; these read ILLIISTALINNFVLVKFLGL, IGMGMATTFVLTVASLSAYLV, IPLEAQFLRTLVFILVIAVIV, LLGIYLPLITTNCAVLGVALL, VLYGFGAALGFSLVLVLFAAL, and SIALITAGLMSLAFMGFTGLV.

The protein belongs to the NqrDE/RnfAE family. As to quaternary structure, the complex is composed of six subunits: RnfA, RnfB, RnfC, RnfD, RnfE and RnfG.

Its subcellular location is the cell inner membrane. Functionally, part of a membrane-bound complex that couples electron transfer with translocation of ions across the membrane. This is Ion-translocating oxidoreductase complex subunit A from Actinobacillus pleuropneumoniae serotype 5b (strain L20).